Consider the following 186-residue polypeptide: Peptide deformylase (186 aa).

2 residues coordinate Fe cation: C113 and H156. E157 is a catalytic residue. H160 contributes to the Fe cation binding site.

Belongs to the polypeptide deformylase family. Requires Fe(2+) as cofactor.

The catalysed reaction is N-terminal N-formyl-L-methionyl-[peptide] + H2O = N-terminal L-methionyl-[peptide] + formate. In terms of biological role, removes the formyl group from the N-terminal Met of newly synthesized proteins. Requires at least a dipeptide for an efficient rate of reaction. N-terminal L-methionine is a prerequisite for activity but the enzyme has broad specificity at other positions. The protein is Peptide deformylase of Lactiplantibacillus plantarum (strain ATCC BAA-793 / NCIMB 8826 / WCFS1) (Lactobacillus plantarum).